Consider the following 565-residue polypeptide: Adenine deaminase (565 aa).

It belongs to the metallo-dependent hydrolases superfamily. Adenine deaminase family. It depends on Mn(2+) as a cofactor.

It carries out the reaction adenine + H2O + H(+) = hypoxanthine + NH4(+). The chain is Adenine deaminase from Methylobacterium nodulans (strain LMG 21967 / CNCM I-2342 / ORS 2060).